We begin with the raw amino-acid sequence, 512 residues long: Respiratory nitrate reductase 1 beta chain (512 aa).

3 4Fe-4S ferredoxin-type domains span residues 7 to 35 (VGMV…SREG), 175 to 206 (TFMM…KREE), and 208 to 237 (GIVL…FNWK). C16, C19, C22, C26, C184, C187, and C192 together coordinate [4Fe-4S] cluster. Residues C196, C217, and C223 each coordinate [3Fe-4S] cluster. C227, C244, C247, C259, and C263 together coordinate [4Fe-4S] cluster.

Dimer of heterotrimers each composed of an alpha, a beta and a gamma chain. Alpha and beta are catalytic chains; gamma chains are involved in binding the enzyme complex to the cytoplasmic membrane. [4Fe-4S] cluster is required as a cofactor. [3Fe-4S] cluster serves as cofactor.

The protein resides in the cell membrane. It carries out the reaction nitrate + a quinol = a quinone + nitrite + H2O. In terms of biological role, the nitrate reductase enzyme complex allows S.flexneri to use nitrate as an electron acceptor during anaerobic growth. The beta chain is an electron transfer unit containing four cysteine clusters involved in the formation of iron-sulfur centers. Electrons are transferred from the gamma chain to the molybdenum cofactor of the alpha subunit. This Shigella flexneri protein is Respiratory nitrate reductase 1 beta chain (narH).